A 326-amino-acid polypeptide reads, in one-letter code: 4-hydroxythreonine-4-phosphate dehydrogenase (326 aa).

Residues H134 and T135 each contribute to the substrate site. The a divalent metal cation site is built by H164, H209, and H264. Substrate-binding residues include K272, N281, and R290.

This sequence belongs to the PdxA family. Homodimer. Requires Zn(2+) as cofactor. Mg(2+) is required as a cofactor. Co(2+) serves as cofactor.

The protein resides in the cytoplasm. It carries out the reaction 4-(phosphooxy)-L-threonine + NAD(+) = 3-amino-2-oxopropyl phosphate + CO2 + NADH. It functions in the pathway cofactor biosynthesis; pyridoxine 5'-phosphate biosynthesis; pyridoxine 5'-phosphate from D-erythrose 4-phosphate: step 4/5. In terms of biological role, catalyzes the NAD(P)-dependent oxidation of 4-(phosphooxy)-L-threonine (HTP) into 2-amino-3-oxo-4-(phosphooxy)butyric acid which spontaneously decarboxylates to form 3-amino-2-oxopropyl phosphate (AHAP). The protein is 4-hydroxythreonine-4-phosphate dehydrogenase of Colwellia psychrerythraea (strain 34H / ATCC BAA-681) (Vibrio psychroerythus).